The sequence spans 310 residues: NAD-dependent protein deacylase sirtuin-5, mitochondrial (310 aa).

Residues 1 to 36 (MQPLQIAPCRLLYGLYRGLKSPASTGTRICPAMARP) constitute a mitochondrion transit peptide. The Deacetylase sirtuin-type domain maps to 37–307 (SSNMADFRKL…PEALAPHETG (271 aa)). 58–77 (GAGVSAESGVPTFRGAGGYW) contributes to the NAD(+) binding site. Positions 102 and 105 each coordinate substrate. 140 to 143 (QNID) lines the NAD(+) pocket. His-158 functions as the Proton acceptor in the catalytic mechanism. Cys-166, Cys-169, Cys-207, and Cys-212 together coordinate Zn(2+). Residues 249 to 251 (GTS), 275 to 277 (NME), and Cys-293 each bind NAD(+).

It belongs to the sirtuin family. Class III subfamily. As to quaternary structure, monomer. Homodimer. Interacts with CPS1. Interacts with PCCA. It depends on Zn(2+) as a cofactor.

The protein resides in the mitochondrion. Its subcellular location is the cytoplasm. It localises to the cytosol. It is found in the nucleus. The catalysed reaction is N(6)-malonyl-L-lysyl-[protein] + NAD(+) + H2O = 2''-O-malonyl-ADP-D-ribose + nicotinamide + L-lysyl-[protein]. It catalyses the reaction N(6)-succinyl-L-lysyl-[protein] + NAD(+) + H2O = 2''-O-succinyl-ADP-D-ribose + nicotinamide + L-lysyl-[protein]. The enzyme catalyses N(6)-glutaryl-L-lysyl-[protein] + NAD(+) + H2O = 2''-O-glutaryl-ADP-D-ribose + nicotinamide + L-lysyl-[protein]. Functionally, NAD-dependent lysine demalonylase, desuccinylase and deglutarylase that specifically removes malonyl, succinyl and glutaryl groups on target proteins. Activates CPS1 and contributes to the regulation of blood ammonia levels during prolonged fasting: acts by mediating desuccinylation and deglutarylation of CPS1, thereby increasing CPS1 activity in response to elevated NAD levels during fasting. Activates SOD1 by mediating its desuccinylation, leading to reduced reactive oxygen species. Activates SHMT2 by mediating its desuccinylation. Modulates ketogenesis through the desuccinylation and activation of HMGCS2. Has weak NAD-dependent protein deacetylase activity; however this activity may not be physiologically relevant in vivo. Can deacetylate cytochrome c (CYCS) and a number of other proteins in vitro such as UOX. This chain is NAD-dependent protein deacylase sirtuin-5, mitochondrial, found in Canis lupus familiaris (Dog).